The chain runs to 74 residues: uncharacterized protein (74 aa).

This is an uncharacterized protein from Bacillus subtilis (strain 168).